The following is a 329-amino-acid chain: GMP reductase (329 aa).

Catalysis depends on cysteine 178, which acts as the Thioimidate intermediate. 207–230 (VIADGGIRTHGDVAKSIRMGATMV) serves as a coordination point for NADP(+).

Belongs to the IMPDH/GMPR family. GuaC type 2 subfamily.

The enzyme catalyses IMP + NH4(+) + NADP(+) = GMP + NADPH + 2 H(+). Catalyzes the irreversible NADPH-dependent deamination of GMP to IMP. It functions in the conversion of nucleobase, nucleoside and nucleotide derivatives of G to A nucleotides, and in maintaining the intracellular balance of A and G nucleotides. This Lactococcus lactis subsp. cremoris (strain MG1363) protein is GMP reductase.